The primary structure comprises 80 residues: Large ribosomal subunit protein bL31B (80 aa).

It belongs to the bacterial ribosomal protein bL31 family. Type B subfamily. In terms of assembly, part of the 50S ribosomal subunit.

The polypeptide is Large ribosomal subunit protein bL31B (Streptococcus thermophilus (strain CNRZ 1066)).